Consider the following 487-residue polypeptide: Glutamyl-tRNA(Gln) amidotransferase subunit A (487 aa).

Catalysis depends on charge relay system residues lysine 74 and serine 149. Serine 173 functions as the Acyl-ester intermediate in the catalytic mechanism.

Belongs to the amidase family. GatA subfamily. As to quaternary structure, heterotrimer of A, B and C subunits.

The catalysed reaction is L-glutamyl-tRNA(Gln) + L-glutamine + ATP + H2O = L-glutaminyl-tRNA(Gln) + L-glutamate + ADP + phosphate + H(+). In terms of biological role, allows the formation of correctly charged Gln-tRNA(Gln) through the transamidation of misacylated Glu-tRNA(Gln) in organisms which lack glutaminyl-tRNA synthetase. The reaction takes place in the presence of glutamine and ATP through an activated gamma-phospho-Glu-tRNA(Gln). The protein is Glutamyl-tRNA(Gln) amidotransferase subunit A of Synechococcus sp. (strain WH7803).